The primary structure comprises 115 residues: Macrophage migration inhibitory factor (115 aa).

Proline 2 acts as the Proton acceptor; via imino nitrogen in catalysis. Residues lysine 33 and isoleucine 65 each contribute to the substrate site. Residue lysine 78 is modified to N6-acetyllysine; alternate. Lysine 78 carries the post-translational modification N6-succinyllysine; alternate. A substrate-binding site is contributed by asparagine 98.

The protein belongs to the MIF family. Homotrimer. Interacts with CD74 and CXCR2 extracellular domain and COPS5. Interacts with the USO1 and BNIPL.

It is found in the secreted. The protein resides in the cytoplasm. The enzyme catalyses 3-phenylpyruvate = enol-phenylpyruvate. The catalysed reaction is L-dopachrome = 5,6-dihydroxyindole-2-carboxylate. Its function is as follows. Pro-inflammatory cytokine involved in the innate immune response to bacterial pathogens. The expression of MIF at sites of inflammation suggests a role as mediator in regulating the function of macrophages in host defense. Counteracts the anti-inflammatory activity of glucocorticoids. Has phenylpyruvate tautomerase and dopachrome tautomerase activity (in vitro), but the physiological substrate is not known. It is not clear whether the tautomerase activity has any physiological relevance, and whether it is important for cytokine activity. The protein is Macrophage migration inhibitory factor of Mus musculus (Mouse).